The following is a 538-amino-acid chain: Chaperonin GroEL 1 (538 aa).

Residues 29–32 (TLGP), 86–90 (DGTTT), G413, and D494 contribute to the ATP site.

The protein belongs to the chaperonin (HSP60) family. As to quaternary structure, forms a cylinder of 14 subunits composed of two heptameric rings stacked back-to-back. Interacts with the co-chaperonin GroES.

Its subcellular location is the cytoplasm. It catalyses the reaction ATP + H2O + a folded polypeptide = ADP + phosphate + an unfolded polypeptide.. Together with its co-chaperonin GroES, plays an essential role in assisting protein folding. The GroEL-GroES system forms a nano-cage that allows encapsulation of the non-native substrate proteins and provides a physical environment optimized to promote and accelerate protein folding. The polypeptide is Chaperonin GroEL 1 (Mycobacterium avium (strain 104)).